The sequence spans 203 residues: Large ribosomal subunit protein bL25 (203 aa).

The protein belongs to the bacterial ribosomal protein bL25 family. CTC subfamily. Part of the 50S ribosomal subunit; part of the 5S rRNA/L5/L18/L25 subcomplex. Contacts the 5S rRNA. Binds to the 5S rRNA independently of L5 and L18.

Its function is as follows. This is one of the proteins that binds to the 5S RNA in the ribosome where it forms part of the central protuberance. The protein is Large ribosomal subunit protein bL25 of Rickettsia typhi (strain ATCC VR-144 / Wilmington).